A 91-amino-acid polypeptide reads, in one-letter code: Large ribosomal subunit protein bL27 (91 aa).

Belongs to the bacterial ribosomal protein bL27 family.

This Pseudomonas savastanoi pv. phaseolicola (strain 1448A / Race 6) (Pseudomonas syringae pv. phaseolicola (strain 1448A / Race 6)) protein is Large ribosomal subunit protein bL27.